Consider the following 172-residue polypeptide: RNA silencing suppressor p19 (172 aa).

The disordered stretch occupies residues 153–172; that stretch reads EGNVSRGSPEGTEAFKEESE.

The protein belongs to the tombusvirus protein p19 family. As to quaternary structure, homodimer.

Its function is as follows. Viral suppressor of RNA silencing which binds specifically to silencing RNAs (siRNAs). Acts as a molecular caliper to specifically select siRNAs based on the length of the duplex region of the RNA. The chain is RNA silencing suppressor p19 from Pear latent virus (PeLV).